A 562-amino-acid polypeptide reads, in one-letter code: Bacillolysin (562 aa).

Residues 1-24 (MKKKKQALKVLLSVGILSSSFAFA) form the signal peptide. A propeptide spans 25 to 245 (HTSSAAPNNV…KQAAKPAAKP (221 aa)) (activation peptide). Positions 303, 305, and 384 each coordinate Ca(2+). Residue His388 participates in Zn(2+) binding. The active site involves Glu389. 2 residues coordinate Zn(2+): His392 and Glu412. Residues Glu423, Asn429, Asp431, Glu433, Glu436, Tyr439, Thr440, and Asp446 each coordinate Ca(2+). The active-site Proton donor is His477.

It belongs to the peptidase M4 family. The cofactor is Ca(2+). It depends on Zn(2+) as a cofactor.

It localises to the secreted. The catalysed reaction is Similar, but not identical, to that of thermolysin.. Its function is as follows. Extracellular zinc metalloprotease. The chain is Bacillolysin from Priestia megaterium (strain ATCC 14581 / DSM 32 / CCUG 1817 / JCM 2506 / NBRC 15308 / NCIMB 9376 / NCTC 10342 / NRRL B-14308 / VKM B-512 / Ford 19) (Bacillus megaterium).